The following is a 115-amino-acid chain: Large ribosomal subunit protein bL19 (115 aa).

Belongs to the bacterial ribosomal protein bL19 family.

This protein is located at the 30S-50S ribosomal subunit interface and may play a role in the structure and function of the aminoacyl-tRNA binding site. The protein is Large ribosomal subunit protein bL19 of Parabacteroides distasonis (strain ATCC 8503 / DSM 20701 / CIP 104284 / JCM 5825 / NCTC 11152).